Reading from the N-terminus, the 407-residue chain is UPF0761 membrane protein AZOSEA40600 (407 aa).

Helical transmembrane passes span 29 to 49 (SLAF…IALF), 92 to 112 (GLTL…LMTI), 132 to 152 (LMVH…SVLA), 174 to 194 (FARL…YYAV), 207 to 227 (GGIA…LFIV), and 239 to 259 (FAVL…ILLG).

The protein belongs to the UPF0761 family.

It is found in the cell inner membrane. The chain is UPF0761 membrane protein AZOSEA40600 from Aromatoleum aromaticum (strain DSM 19018 / LMG 30748 / EbN1) (Azoarcus sp. (strain EbN1)).